The chain runs to 307 residues: MLQQRTIKTLTRAVGVGLHSGQRVELTLRPAQPDTGIVFRRVDLPEPVDIPITATAVVDTRMASTIGAGGAKVHTVEHLMSACAGLGLDNLYIDITAEEVPILDGSSASFVFLLQSAGVELQNAPKRFIRVKRPVEVREGTGQQLKWARLEPYHGFKLRFDIDFAHPAVDSTGQSAEFDLGEGNYARDIARARTFGFTKDVEMLRSSGLALGGGLDNAIVMDDYKVLNADGLRYDAEFARHKILDAMGDLYLVGKPLLAAYSAFRSGHAMNNLLLRELLAHEDAWEIVTFENERQAPAGFTQPVRAW.

Positions 78, 241, and 245 each coordinate Zn(2+). The active-site Proton donor is the His-268.

It belongs to the LpxC family. Requires Zn(2+) as cofactor.

The catalysed reaction is a UDP-3-O-[(3R)-3-hydroxyacyl]-N-acetyl-alpha-D-glucosamine + H2O = a UDP-3-O-[(3R)-3-hydroxyacyl]-alpha-D-glucosamine + acetate. It participates in glycolipid biosynthesis; lipid IV(A) biosynthesis; lipid IV(A) from (3R)-3-hydroxytetradecanoyl-[acyl-carrier-protein] and UDP-N-acetyl-alpha-D-glucosamine: step 2/6. In terms of biological role, catalyzes the hydrolysis of UDP-3-O-myristoyl-N-acetylglucosamine to form UDP-3-O-myristoylglucosamine and acetate, the committed step in lipid A biosynthesis. The chain is UDP-3-O-acyl-N-acetylglucosamine deacetylase from Acidovorax ebreus (strain TPSY) (Diaphorobacter sp. (strain TPSY)).